Reading from the N-terminus, the 258-residue chain is Octanoyltransferase (258 aa).

The 185-residue stretch at 42–226 (NVGTDTLLLL…AVVAALDGEL (185 aa)) folds into the BPL/LPL catalytic domain. Substrate-binding positions include 80-87 (RGGKITWH), 156-158 (AIG), and 169-171 (GFS). Residue cysteine 187 is the Acyl-thioester intermediate of the active site.

This sequence belongs to the LipB family.

Its subcellular location is the cytoplasm. It catalyses the reaction octanoyl-[ACP] + L-lysyl-[protein] = N(6)-octanoyl-L-lysyl-[protein] + holo-[ACP] + H(+). It participates in protein modification; protein lipoylation via endogenous pathway; protein N(6)-(lipoyl)lysine from octanoyl-[acyl-carrier-protein]: step 1/2. Functionally, catalyzes the transfer of endogenously produced octanoic acid from octanoyl-acyl-carrier-protein onto the lipoyl domains of lipoate-dependent enzymes. Lipoyl-ACP can also act as a substrate although octanoyl-ACP is likely to be the physiological substrate. The sequence is that of Octanoyltransferase from Rhodococcus jostii (strain RHA1).